We begin with the raw amino-acid sequence, 253 residues long: Transcription factor bHLH106 (253 aa).

The bHLH domain occupies 66–115 (AALRNHKEAERRRRERINSHLNKLRNVLSCNSKTDKATLLAKVVQRVREL).

Homodimer.

It is found in the nucleus. The protein is Transcription factor bHLH106 (BHLH106) of Arabidopsis thaliana (Mouse-ear cress).